Reading from the N-terminus, the 666-residue chain is ATP-dependent zinc metalloprotease FtsH (666 aa).

Positions 1 to 23 are disordered; that stretch reads MSREVTSGLPQDKPTGSAPPPPP. The Cytoplasmic portion of the chain corresponds to 1 to 27; the sequence is MSREVTSGLPQDKPTGSAPPPPPPWRR. A helical transmembrane segment spans residues 28–48; it reads WLLPIGLLVSLVLLFTFPMRP. The Extracellular segment spans residues 49–125; it reads SSGKTLTYSE…RPPGPSLASQ (77 aa). The helical transmembrane segment at 126–146 threads the bilayer; sequence VLAGVLSFLPFLLLLGLFAYS. At 147–666 the chain is on the cytoplasmic side; it reads GRRAGAGFLA…RTAASSDDLL (520 aa). 219-226 lines the ATP pocket; it reads GPPGTGKT. His-442 serves as a coordination point for Zn(2+). Glu-443 is an active-site residue. The Zn(2+) site is built by His-446 and Asp-518. The interval 626–666 is disordered; that stretch reads PEEHREAAARHVRRPGIAAATGASMAGGSEPRTAASSDDLL. Low complexity predominate over residues 641 to 653; that stretch reads GIAAATGASMAGG.

The protein in the central section; belongs to the AAA ATPase family. In the C-terminal section; belongs to the peptidase M41 family. As to quaternary structure, homohexamer. Zn(2+) is required as a cofactor.

Its subcellular location is the cell membrane. Acts as a processive, ATP-dependent zinc metallopeptidase for both cytoplasmic and membrane proteins. Plays a role in the quality control of integral membrane proteins. The chain is ATP-dependent zinc metalloprotease FtsH from Acidothermus cellulolyticus (strain ATCC 43068 / DSM 8971 / 11B).